Reading from the N-terminus, the 2321-residue chain is Major viral transcription factor ICP4 homolog (2321 aa).

7 disordered regions span residues 19 to 183 (GIFP…SPPL), 296 to 329 (ILHTNSPTPPTSTSPAPIPSPTQPPACLPSPAPI), 350 to 438 (EFIQ…PSLG), 954 to 1180 (MDDD…SGLA), 1360 to 1392 (DNSSETEKGISSKPSTSPSVLITTSTQTTAPPH), 1597 to 1841 (LLND…PSCY), and 2277 to 2321 (QHEE…TFTD). Low complexity predominate over residues 114–147 (SSNRPGGRNSSNGADESGESSSDRSPSYSPCDSY). 2 stretches are compositionally biased toward pro residues: residues 302-329 (PTPPTSTSPAPIPSPTQPPACLPSPAPI) and 355-367 (QSPPSPPQAPSPP). Residues 368–389 (AHSSSSCSPSHLAPSPLSSSPL) show a composition bias toward low complexity. Over residues 390–410 (SSPPQLSPAPVSPPSSPPPLS) the composition is skewed to pro residues. 2 stretches are compositionally biased toward polar residues: residues 424 to 433 (SISSQPQSCP) and 1002 to 1011 (PRLTTPSSGR). The segment covering 1031-1093 (PETSPSNEHI…PSSPSSSRSP (63 aa)) has biased composition (low complexity). Over residues 1151–1161 (GGGRPRGRPPK) the composition is skewed to basic residues. Polar residues-rich tracts occupy residues 1169-1180 (NDIQVTSSSGLA) and 1371-1389 (SKPSTSPSVLITTSTQTTA). A compositionally biased stretch (low complexity) spans 1630 to 1644 (STSSSQSASDKSPIK). Composition is skewed to polar residues over residues 1720-1743 (KAQTDETLPETSTAHPSAMDQSSS) and 1801-1816 (VGQTLLDPTTTTHDIL). Positions 1817–1839 (SSSLPNRSCSSSPSPSKRPYHPS) are enriched in low complexity.

This sequence belongs to the herpesviridae ICP4 family. A long stretch of serine residues may be a major site of phosphorylation.

The protein localises to the host nucleus. Its function is as follows. This IE protein is a multifunctional protein capable of migrating to the nucleus, binding to DNA, trans-activating other viral genes, and autoregulating its own synthesis. It is required for the switch from immediate-early to early mode of gene expression. In Gallus gallus (Chicken), this protein is Major viral transcription factor ICP4 homolog (MDV084).